We begin with the raw amino-acid sequence, 510 residues long: Indoleacetate--CoA ligase (510 aa).

This sequence belongs to the ATP-dependent AMP-binding enzyme family. As to quaternary structure, monomer.

It catalyses the reaction (indol-3-yl)acetate + ATP + CoA = (indol-3-yl)acetyl-CoA + AMP + diphosphate. It carries out the reaction (indol-3-yl)acetate + ATP + H(+) = (indol-3-yl)acetyl-AMP + diphosphate. The catalysed reaction is (indol-3-yl)acetyl-AMP + CoA = (indol-3-yl)acetyl-CoA + AMP + H(+). With respect to regulation, inhibited by high concentrations of substrates, and by the synthetic auxin compound 2,4-dichlorophenoxyacetate (2,4-D), which does not serve as substrate. Its function is as follows. Involved in degradation of indoleacetate, the most common member of the auxin class of plant hormones. Highly specific indoleacetate-CoA ligase which catalyzes the ATP-dependent activation of indoleacetate (IAA) to indoleacetyl-CoA. Also activates some closely related compounds such as the non-physiological compound (2-naphthyl)acetate and phenylacetate, which seems to be a fortuitous substrate for IaaB. The chain is Indoleacetate--CoA ligase from Aromatoleum aromaticum (strain DSM 19018 / LMG 30748 / EbN1) (Azoarcus sp. (strain EbN1)).